A 475-amino-acid chain; its full sequence is Ribulose bisphosphate carboxylase large chain (475 aa).

The propeptide occupies 1-2; it reads MS. Pro-3 carries the N-acetylproline modification. Residues Thr-65, Asn-123, and Thr-173 each coordinate substrate. The active-site Proton acceptor is the Lys-175. Lys-177 is a binding site for substrate. Mg(2+) is bound by residues Lys-201, Asp-203, and Glu-204. An N6-carboxylysine modification is found at Lys-201. Glu-204, His-294, Arg-295, His-327, Lys-334, Ser-379, Gly-381, Gly-403, and Gly-404 together coordinate substrate. His-294 acts as the Proton acceptor in catalysis.

The protein belongs to the RuBisCO large chain family. Type I subfamily. In terms of assembly, heterohexadecamer of 8 large chains and 8 small chains. The cofactor is Mg(2+). In terms of processing, the disulfide bond which can form between Cys-247 in the large chain dimeric partners within the hexadecamer appears to be associated with oxidative stress and protein turnover. The disulfide bonds reported in 1RBO may be the result of oxidation during crystallization.

It localises to the plastid. The protein resides in the chloroplast. The catalysed reaction is 2 (2R)-3-phosphoglycerate + 2 H(+) = D-ribulose 1,5-bisphosphate + CO2 + H2O. It carries out the reaction D-ribulose 1,5-bisphosphate + O2 = 2-phosphoglycolate + (2R)-3-phosphoglycerate + 2 H(+). Its activity is regulated as follows. Abscisic acid (ABA) causes weak inhibition of RuBisCO catalytic activity, but more potent inhibition of RuBisCO activation. Its function is as follows. RuBisCO catalyzes two reactions: the carboxylation of D-ribulose 1,5-bisphosphate, the primary event in carbon dioxide fixation, as well as the oxidative fragmentation of the pentose substrate in the photorespiration process. Both reactions occur simultaneously and in competition at the same active site. Binds to abscisic acid (ABA) which has weakly inhibits carboxylation and more strongly inhibits enzyme activation. The chain is Ribulose bisphosphate carboxylase large chain from Spinacia oleracea (Spinach).